The primary structure comprises 673 residues: Cell division cycle protein 23 homolog (673 aa).

TPR repeat units follow at residues 86-120 (AEMWTNEILAHLPDKWCAPNTLNLYNQVSELVLDN), 159-195 (NKEFRRAAFFLEKTMNGNKLDHFLHFRCLFLAYYQEH), 232-267 (EDVWFEYLMGLLEVELGLKDLAEKSFRNVVIREPRI), 332-365 (PMIITKIAACSNARHDHDQAISNFEDVRKADPYR), 400-433 (WETCCIVANYHAIRRDSEHAIKFFQRALRLNPGL), 434-467 (AALWVLIGHEFMEMKNNAAACVSYRRAIEIDPAD), 469-501 (RGWYGLGQMYDIMKMPAYALFYYQEAQKCKPHD), 502-535 (SRLLVALGDIYSKLNRIEDAEKCFTGAYLFGDVE), 539-572 (LWSLAKLHERYSDDNKAAQAFEVFLVVYELVTSA), and 577-610 (IYAIAFLANHFFKIEDFDKASEYATKCLAFETLC). The interval 628–673 (SRLPVEEAPGPSNASAAGGQEAMDTEEAPQEGGEEEMSEGEDDFSF) is disordered. Residues 635–646 (APGPSNASAAGG) show a composition bias toward low complexity. The span at 650-673 (MDTEEAPQEGGEEEMSEGEDDFSF) shows a compositional bias: acidic residues.

This sequence belongs to the APC8/CDC23 family. The APC/C complex is probably composed of at least 12 subunits: apc-2, apc-10, apc-11, cdc-26, emb-1, emb-27, emb-30, mat-1, mat-2, mat-3, such-1 and gfi-3.

The protein operates within protein modification; protein ubiquitination. In terms of biological role, probable component of the anaphase promoting complex/cyclosome (APC/C), a cell cycle-regulated E3 ubiquitin ligase that controls progression through mitosis and the G1 phase of the cell cycle. The APC/C complex acts by mediating ubiquitination and subsequent degradation of target proteins. Developmental role in early embryogenesis and the metaphase to anaphase transition in oocyte and spermatocyte meiosis and mitosis in germ cells. Required for embryonic anterior-posterior axis formation. Plays a role in regulating the abundance of glr-1 receptors in postmitotic neurons, which may in turn control animal locomotion. Involved in regulating GABA neurotransmitter release at neuromuscular junctions in GABA motor neurons. The sequence is that of Cell division cycle protein 23 homolog from Caenorhabditis elegans.